We begin with the raw amino-acid sequence, 267 residues long: Hydroxyethylthiazole kinase (267 aa).

Position 46 (Met-46) interacts with substrate. Positions 122 and 168 each coordinate ATP. Gly-195 lines the substrate pocket.

It belongs to the Thz kinase family. Mg(2+) is required as a cofactor.

It catalyses the reaction 5-(2-hydroxyethyl)-4-methylthiazole + ATP = 4-methyl-5-(2-phosphooxyethyl)-thiazole + ADP + H(+). The protein operates within cofactor biosynthesis; thiamine diphosphate biosynthesis; 4-methyl-5-(2-phosphoethyl)-thiazole from 5-(2-hydroxyethyl)-4-methylthiazole: step 1/1. Its function is as follows. Catalyzes the phosphorylation of the hydroxyl group of 4-methyl-5-beta-hydroxyethylthiazole (THZ). The polypeptide is Hydroxyethylthiazole kinase (Nitratidesulfovibrio vulgaris (strain ATCC 29579 / DSM 644 / CCUG 34227 / NCIMB 8303 / VKM B-1760 / Hildenborough) (Desulfovibrio vulgaris)).